The primary structure comprises 508 residues: Lysine--tRNA ligase (508 aa).

Residues glutamate 418 and glutamate 425 each coordinate Mg(2+).

It belongs to the class-II aminoacyl-tRNA synthetase family. Homodimer. It depends on Mg(2+) as a cofactor.

It localises to the cytoplasm. The enzyme catalyses tRNA(Lys) + L-lysine + ATP = L-lysyl-tRNA(Lys) + AMP + diphosphate. The chain is Lysine--tRNA ligase from Burkholderia thailandensis (strain ATCC 700388 / DSM 13276 / CCUG 48851 / CIP 106301 / E264).